Reading from the N-terminus, the 73-residue chain is YFSYNDKIIKILEAEYLNADHHFTSGTVISDKLEIACGSGILRVKKLQQESKKALNIEEFLRGTNILKDTVLK.

It belongs to the Fmt family.

The catalysed reaction is L-methionyl-tRNA(fMet) + (6R)-10-formyltetrahydrofolate = N-formyl-L-methionyl-tRNA(fMet) + (6S)-5,6,7,8-tetrahydrofolate + H(+). Its function is as follows. Attaches a formyl group to the free amino group of methionyl-tRNA(fMet). The formyl group appears to play a dual role in the initiator identity of N-formylmethionyl-tRNA by promoting its recognition by IF2 and preventing the misappropriation of this tRNA by the elongation apparatus. This is Methionyl-tRNA formyltransferase (fmt) from Rickettsia parkeri.